A 226-amino-acid polypeptide reads, in one-letter code: Enolase-phosphatase E1 (226 aa).

It belongs to the HAD-like hydrolase superfamily. MasA/MtnC family. As to quaternary structure, monomer. Mg(2+) is required as a cofactor.

The enzyme catalyses 5-methylsulfanyl-2,3-dioxopentyl phosphate + H2O = 1,2-dihydroxy-5-(methylsulfanyl)pent-1-en-3-one + phosphate. It functions in the pathway amino-acid biosynthesis; L-methionine biosynthesis via salvage pathway; L-methionine from S-methyl-5-thio-alpha-D-ribose 1-phosphate: step 3/6. It participates in amino-acid biosynthesis; L-methionine biosynthesis via salvage pathway; L-methionine from S-methyl-5-thio-alpha-D-ribose 1-phosphate: step 4/6. Bifunctional enzyme that catalyzes the enolization of 2,3-diketo-5-methylthiopentyl-1-phosphate (DK-MTP-1-P) into the intermediate 2-hydroxy-3-keto-5-methylthiopentenyl-1-phosphate (HK-MTPenyl-1-P), which is then dephosphorylated to form the acireductone 1,2-dihydroxy-3-keto-5-methylthiopentene (DHK-MTPene). The protein is Enolase-phosphatase E1 of Shewanella oneidensis (strain ATCC 700550 / JCM 31522 / CIP 106686 / LMG 19005 / NCIMB 14063 / MR-1).